A 712-amino-acid chain; its full sequence is Polyribonucleotide nucleotidyltransferase (712 aa).

Mg(2+) contacts are provided by Asp487 and Asp493. One can recognise a KH domain in the interval Pro554 to Ile613. One can recognise an S1 motif domain in the interval Gly623–Lys691.

This sequence belongs to the polyribonucleotide nucleotidyltransferase family. Mg(2+) serves as cofactor.

The protein resides in the cytoplasm. It catalyses the reaction RNA(n+1) + phosphate = RNA(n) + a ribonucleoside 5'-diphosphate. Involved in mRNA degradation. Catalyzes the phosphorolysis of single-stranded polyribonucleotides processively in the 3'- to 5'-direction. The protein is Polyribonucleotide nucleotidyltransferase of Bacillus anthracis (strain CDC 684 / NRRL 3495).